The following is a 1088-amino-acid chain: MSSWNYVVTAHKPTSVTHSCVGNFTSPQELNLIVAKCTRIEIHLLTPQGLQPMLDVPIYGRIATLELFRPHGEAQDFLFIATERYKFCVLQWDPESSELITRAMGDVSDRIGRPTDNGQIGIIDPDCRLIGLHLYDGLFKVIPFDNKGQLKEAFNIRLEELQVLDIKFLFGCAKPTIAVLYQDNKDARHVKTYEVSLKDKDFVEGPWSQNSLDNGADLLIPVPPPLCGVLIIGEETIVYCSASAFKAIPIRPSITKAYGRVDVDGSRYLLGDHAGMIHLLVITHEKEKVTGLKIELLGETSIASTISYLDNAVVFVGSSYGDSQLVKLNLHPDAKGSYVEVLERYINLGPIVDFCVVDLERQGQGQVVTCSGAFKDGSLRVVRNGIGINEQASVELQGIKGMWSLKSSIDEAFDTFLVVSFISETRILAMNLEDELEETEIEGFLSQVQTLFCHDAVYNQLVQVTSNSVRLVSSTTRELRDEWHAPAGFTVNVATANASQVLLATGGGHLVYLEIGDGKLTEVQHALLEYEVSCLDINPIGDNPNYSQLAAVGMWTDISVRIFSLPELTLITKEQLGGEIIPRSVLLCAFEGISYLLCALGDGHLLNFQMDTTTGQLKDRKKVSLGTQPITLRTFSSKSATHVFAASDRPTVIYSSNKKLLYSNVNLKEVSHMCPFNSAAFPDSLAIAREGELTIGTIDDIQKLHIRTIPLGEHARRICHQEQTRTFGICSLGNQSNSEESEMHFVRLLDDQTFEFMSTYPLDSFEYGCSILSCSFTEDKNVYYCVGTAYVLPEENEPTKGRILVFIVEDGRLQLIAEKETKGAVYSLNAFNGKLLAAINQKIQLYKWMLRDDGTRELQSECGHHGHILALYVQTRGDFIVVGDLMKSISLLLYKHEEGAIEERARDYNANWMSAVEILDDDIYLGAENNFNLLTVKKNSEGATDEERGRLEVVGEYHLGEFVNRFRHGSLVMRLPDSEIGQIPTVIFGTVNGVIGVIASLPQEQYTFLEKLQSSLRKVIKGVGGLSHEQWRSFNNEKRTAEARNFLDGDLIESFLDLSRNKMEDISKSMNVQVEELCKRVEELTRLH.

This sequence belongs to the DDB1 family. As to quaternary structure, component of the CDD complex, at least composed of COP10, DET1 and DDB1A. Component of the CUL4-RBX1-CDD complex. Component of the CUL4-RBX1-DDB1-PRL1 E3 ubiquitin-protein ligase complex. Component of the UV-DDB complex, which is composed of DDB1A and DDB2. Interacts with RAE1. Interacts with WDR55. Interacts with ATCSA-1. Interacts with DDA1. Binds to ASG2; the subcellular localization of this complex depends on ASG2 farnesylation status. Binds to KTN80.2/DWA3. Interacts with HTD1. Interacts directly with DHU1.

It is found in the cytoplasm. The protein resides in the nucleus. The protein operates within protein modification; protein ubiquitination. Component of light signal transduction machinery. Involved in repression of photomorphogenesis in darkness by participating in the CDD complex, a complex probably required to regulate the activity of ubiquitin conjugating enzymes (E2s). Repression of photomorphogenesis is probably mediated by ubiquitination and subsequent degradation of photomorphogenesis-promoting factors such as HY5, HYH and LAF1. Plays a role in DNA repair by forming with DDB2 the UV-damaged DNA-binding protein complex (UV-DDB). Component of the CUL4-RBX1-DDB1-PRL1 E3 ubiquitin-protein ligase complex. In Arabidopsis thaliana (Mouse-ear cress), this protein is DNA damage-binding protein 1a.